Consider the following 308-residue polypeptide: UDP-N-acetylenolpyruvoylglucosamine reductase (308 aa).

Positions 22-185 constitute an FAD-binding PCMH-type domain; that stretch reads RVGGPADWLF…VEAAFRADAG (164 aa). The active site involves arginine 165. Residues 197 to 211 are compositionally biased toward basic and acidic residues; that stretch reads QIARRDSSQPTRDRS. Residues 197 to 228 form a disordered region; it reads QIARRDSSQPTRDRSAGSTFRNPAGFSSTGRA. Over residues 212–226 the composition is skewed to polar residues; that stretch reads AGSTFRNPAGFSSTG. The Proton donor role is filled by serine 214. The active site involves glutamate 296.

Belongs to the MurB family. It depends on FAD as a cofactor.

The protein localises to the cytoplasm. It catalyses the reaction UDP-N-acetyl-alpha-D-muramate + NADP(+) = UDP-N-acetyl-3-O-(1-carboxyvinyl)-alpha-D-glucosamine + NADPH + H(+). The protein operates within cell wall biogenesis; peptidoglycan biosynthesis. Its function is as follows. Cell wall formation. This chain is UDP-N-acetylenolpyruvoylglucosamine reductase, found in Cereibacter sphaeroides (strain ATCC 17025 / ATH 2.4.3) (Rhodobacter sphaeroides).